A 464-amino-acid polypeptide reads, in one-letter code: Glycine receptor subunit alpha-3 (464 aa).

The first 33 residues, 1–33 (MAHVRHFRTLVSGFYFWEAALLLSLVATKETDS), serve as a signal peptide directing secretion. At 34–255 (ARSRSAPMSP…RFHLERQMGY (222 aa)) the chain is on the extracellular side. Asn71 carries N-linked (GlcNAc...) asparagine glycosylation. Cys171 and Cys185 are joined by a disulfide. Zn(2+)-binding residues include Glu225 and Asp227. Residues Cys231 and Cys242 are joined by a disulfide bond. Position 235-240 (235-240 (YNTGKF)) interacts with strychnine. His248 provides a ligand contact to Zn(2+). The chain crosses the membrane as a helical span at residues 256-277 (YLIQMYIPSLLIVILSWVSFWI). Over 278–282 (NMDAA) the chain is Cytoplasmic. Residues 283–303 (PARVALGITTVLTMTTQSSGS) form a helical membrane-spanning segment. Residues 304-314 (RASLPKVSYVK) lie on the Extracellular side of the membrane. The chain crosses the membrane as a helical span at residues 315-335 (AIDIWMAVCLLFVFSALLEYA). Residues 336–430 (AVNFVSRQHK…FIDRAKKIDT (95 aa)) lie on the Cytoplasmic side of the membrane. A phosphoserine mark is found at Ser370 and Ser379. Residues 431 to 451 (ISRACFPLAFLIFNIFYWVIY) traverse the membrane as a helical segment. Residues 452–464 (KILRHEDIHQQQD) lie on the Extracellular side of the membrane.

It belongs to the ligand-gated ion channel (TC 1.A.9) family. Glycine receptor (TC 1.A.9.3) subfamily. GLRA3 sub-subfamily. In terms of assembly, homopentamer (in vitro). Heteropentamer composed of GLRA3 and GLRB. Both homopentamers and heteropentamers form functional ion channels, but their characteristics are subtly different. In terms of processing, phosphorylated by PKA; this causes down-regulation of channel activity. As to expression, widely distributed throughout the central nervous system.

The protein resides in the postsynaptic cell membrane. It localises to the perikaryon. Its subcellular location is the cell projection. It is found in the dendrite. The protein localises to the synapse. The protein resides in the cell membrane. It catalyses the reaction chloride(in) = chloride(out). Functionally, glycine receptors are ligand-gated chloride channels. Channel opening is triggered by extracellular glycine. Channel characteristics depend on the subunit composition; heteropentameric channels display faster channel closure. Plays an important role in the down-regulation of neuronal excitability. Contributes to the generation of inhibitory postsynaptic currents. Contributes to increased pain perception in response to increased prostaglandin E2 levels. Plays a role in cellular responses to ethanol. This chain is Glycine receptor subunit alpha-3 (GLRA3), found in Homo sapiens (Human).